A 279-amino-acid chain; its full sequence is MAIRKHKPTTPGRRGSSVADFVEITRTTPEKSLVRPLPKKGGRNNTGRITTRHKGGGHKRQYRVIDFRRHDKDGVDAKVAHIEYDPNRTARIALLHYVDGTKRYIIAPNRLQQGDVVESGPNADIKPGNNLPLRNIPVGTVLHAVELRPGGGAKLARSAGASVQLVAREGKYGQLRLPSGEIRNVDVRCRATIGEVGNAEQSNINWGKAGRNRWKGVRPTVRGVVMNPVDHPHGGGEGKTSGGRHPVNPNGKPEGRTRRPNKESDKLIVRRRRTGKNKR.

2 disordered regions span residues 30-59 (EKSL…GGHK) and 225-279 (VMNP…KNKR). Residues 50–59 (TTRHKGGGHK) show a composition bias toward basic residues. Positions 253–268 (PEGRTRRPNKESDKLI) are enriched in basic and acidic residues. A compositionally biased stretch (basic residues) spans 269 to 279 (VRRRRTGKNKR).

The protein belongs to the universal ribosomal protein uL2 family. Part of the 50S ribosomal subunit. Forms a bridge to the 30S subunit in the 70S ribosome.

Functionally, one of the primary rRNA binding proteins. Required for association of the 30S and 50S subunits to form the 70S ribosome, for tRNA binding and peptide bond formation. It has been suggested to have peptidyltransferase activity; this is somewhat controversial. Makes several contacts with the 16S rRNA in the 70S ribosome. This Kocuria rhizophila (strain ATCC 9341 / DSM 348 / NBRC 103217 / DC2201) protein is Large ribosomal subunit protein uL2.